The sequence spans 456 residues: Anthocyanidin 3-O-glucosyltransferase UFGT (456 aa).

Ser18 lines the kaempferol pocket. Ser18 is a quercetin binding site. Thr19 is a UDP binding site. Residue Thr19 coordinates UDP-alpha-D-glucose. Positions 20 and 84 each coordinate kaempferol. His20 functions as the Proton acceptor in the catalytic mechanism. Gln84 contacts quercetin. The Charge relay role is filled by Asp119. UDP-alpha-D-glucose is bound at residue Thr141. Residues His150 and Gln188 each coordinate kaempferol. The quercetin site is built by His150 and Gln188. Thr280, Ser306, Trp332, Ala333, and His350 together coordinate UDP. UDP-alpha-D-glucose contacts are provided by Thr280, Ser306, Trp332, Ala333, His350, Trp353, Asn354, Ser355, and Glu358. Asn354, Ser355, and Glu358 together coordinate UDP. Position 373 (Gly373) interacts with quercetin. 2 residues coordinate UDP-alpha-D-glucose: Asp374 and Gln375.

This sequence belongs to the UDP-glycosyltransferase family. In terms of tissue distribution, detected only in berry skin.

It carries out the reaction an anthocyanidin + UDP-alpha-D-glucose + H(+) = an anthocyanidin 3-O-beta-D-glucoside + UDP. The enzyme catalyses cyanidin + UDP-alpha-D-glucose = cyanidin 3-O-beta-D-glucoside + UDP + H(+). The catalysed reaction is delphinidin + UDP-alpha-D-glucose = delphinidin 3-O-beta-D-glucoside + UDP. It catalyses the reaction peonidin + UDP-alpha-D-glucose = peonidin 3-O-beta-D-glucoside + UDP. It carries out the reaction pelargonidin + UDP-alpha-D-glucose = pelargonidin 3-O-beta-D-glucoside + UDP. The enzyme catalyses malvidin + UDP-alpha-D-glucose = malvidin 3-O-beta-D-glucoside + UDP. The catalysed reaction is a flavonol + UDP-alpha-D-glucose = a flavonol 3-O-beta-D-glucoside + UDP + H(+). It participates in pigment biosynthesis; anthocyanin biosynthesis. Inhibited by Mn(2+) and Zn(2+). Its function is as follows. In the presence of other necessary color factors, this glycosylation reaction allows the accumulation of anthocyanin pigments. Involved in the formation of red wine pigments. UDP-glucose (UDP-Glc) is the physiological sugar donor, and cyanidin is the natural acceptor in vivo. Can glucosylate the anthocyanidins delphinidin, peonidin, pelargonidin and malvidin. The flavonols quercitin and kaempferol can also be glucosylated in vitro, but with glucosylation rates 50-100 times lower than cyanidin. In vitro, can use UDP-Glc, UDP-5SGlc, UDP-Xyl, UDP-Man, UDP-Gal, UDP-GlcNAc, GDP-Glc, dTDP-Glc and dTDP-Xyl as sugar donors, but not UDP-6OMeGal, UDP-Ara, UDP-6FGal, UDP-GlcN, UDP-2FGal, UDP-5SAra, GDP-Man, GDP-Fuc, UDP-Fuc or UDP-Rha. This is Anthocyanidin 3-O-glucosyltransferase UFGT from Vitis vinifera (Grape).